Reading from the N-terminus, the 102-residue chain is Small ribosomal subunit protein bS18c (102 aa).

Residues 1–19 (MDKTKRPLRKSKRSFRRRL) show a composition bias toward basic residues. The tract at residues 1–26 (MDKTKRPLRKSKRSFRRRLPPPIGSG) is disordered.

The protein belongs to the bacterial ribosomal protein bS18 family. As to quaternary structure, part of the 30S ribosomal subunit.

It is found in the plastid. The protein localises to the chloroplast. The sequence is that of Small ribosomal subunit protein bS18c from Piper cenocladum (Ant piper).